Here is a 293-residue protein sequence, read N- to C-terminus: Glutamyl-Q tRNA(Asp) synthetase (293 aa).

L-glutamate is bound by residues 8 to 12 (RFAPS) and E44. The 'HIGH' region motif lies at 11–21 (PSPSGPLHAGS). C98, C100, Y120, and C124 together coordinate Zn(2+). The L-glutamate site is built by Y183 and R201. Positions 239–243 (KLSKQ) match the 'KMSKS' region motif. K242 is an ATP binding site.

The protein belongs to the class-I aminoacyl-tRNA synthetase family. GluQ subfamily. The cofactor is Zn(2+).

In terms of biological role, catalyzes the tRNA-independent activation of glutamate in presence of ATP and the subsequent transfer of glutamate onto a tRNA(Asp). Glutamate is transferred on the 2-amino-5-(4,5-dihydroxy-2-cyclopenten-1-yl) moiety of the queuosine in the wobble position of the QUC anticodon. This chain is Glutamyl-Q tRNA(Asp) synthetase, found in Janthinobacterium sp. (strain Marseille) (Minibacterium massiliensis).